Consider the following 137-residue polypeptide: Small ribosomal subunit protein uS11 (137 aa).

Disordered regions lie at residues 1–31 (MPPK…AAHI) and 117–137 (TISD…RRRV). A compositionally biased stretch (basic residues) spans 12–21 (KTQKARRRDK).

It belongs to the universal ribosomal protein uS11 family. Part of the 30S ribosomal subunit. Interacts with proteins S7 and S18. Binds to IF-3.

Located on the platform of the 30S subunit, it bridges several disparate RNA helices of the 16S rRNA. Forms part of the Shine-Dalgarno cleft in the 70S ribosome. The protein is Small ribosomal subunit protein uS11 of Rhodococcus jostii (strain RHA1).